We begin with the raw amino-acid sequence, 131 residues long: Serum amyloid A-3 protein (131 aa).

Residues 1–18 (MNLSTGIIFCFLILGVSS) form the signal peptide. A compositionally biased stretch (basic and acidic residues) spans 94-105 (MTRDQVREDSKA). The disordered stretch occupies residues 94-131 (MTRDQVREDSKADQFANEWGRSGKDPNHFRPAGLPDKY).

The protein belongs to the SAA family. In terms of tissue distribution, expressed in the liver. Expressed in mammary epithelial cells. Expressed at high levels in mammary ductal cells and vesicle engorged alveoli, but absent from stromal and connective tissue and leukocytes. Secreted into colostrum and mastitic milk (at protein level). Low expression levels, if any, in normal milk (at protein level).

Its subcellular location is the secreted. Major acute phase reactant. Apolipoprotein of the HDL complex. May have a role in protection of the mammary gland during remodeling and infection. In vitro exhibits antimicrobial activity against Escherichia coli, Streptococcus uberis and Pseudomonas aeruginosa. The chain is Serum amyloid A-3 protein (SAA3) from Bos taurus (Bovine).